Reading from the N-terminus, the 380-residue chain is MAPNIRKSHPLLKMVNNSLIDLPTPSNISSWWNFGSLLGICLMTQILTGLLLAMHYTADTTLAFSSVAHTCRNVQYGWLIRNLHANGASFFFICIYFHIGRGLYYGSYLYKETWNTGVILLLTLMATAFVGYVLPWGQMSFWGATVITNLFSAIPYIGQTLVEWAWGGFSVDNPTLTRFFALHFLLPFMIAGLTLIHLTFLHESGSNNPLGIVSNCDKIPFHPYFTLKDILGFTLMFLPLTTLALFSPNLLGDPENFTPANPLVTPPHIKPEWYFLFAYAILRSIPNKLGGVLALAASVLILFLIPFLHKAKQRTMTFRPISQLLFWILVANLLILTWVGSQPVEHPFIIIGQLASVTYFTILLVLFPIIGALENKMLNY.

4 helical membrane passes run 34–54 (FGSLLGICLMTQILTGLLLAM), 78–99 (WLIRNLHANGASFFFICIYFHI), 114–134 (WNTGVILLLTLMATAFVGYVL), and 179–199 (FFALHFLLPFMIAGLTLIHLT). Positions 84 and 98 each coordinate heme b. The heme b site is built by H183 and H197. H202 is a binding site for a ubiquinone. 4 helical membrane-spanning segments follow: residues 227–247 (LKDILGFTLMFLPLTTLALFS), 289–309 (LGGVLALAASVLILFLIPFLH), 321–341 (ISQLLFWILVANLLILTWVGS), and 348–368 (FIIIGQLASVTYFTILLVLFP).

This sequence belongs to the cytochrome b family. In terms of assembly, the cytochrome bc1 complex contains 11 subunits: 3 respiratory subunits (MT-CYB, CYC1 and UQCRFS1), 2 core proteins (UQCRC1 and UQCRC2) and 6 low-molecular weight proteins (UQCRH/QCR6, UQCRB/QCR7, UQCRQ/QCR8, UQCR10/QCR9, UQCR11/QCR10 and a cleavage product of UQCRFS1). This cytochrome bc1 complex then forms a dimer. Heme b serves as cofactor.

Its subcellular location is the mitochondrion inner membrane. Component of the ubiquinol-cytochrome c reductase complex (complex III or cytochrome b-c1 complex) that is part of the mitochondrial respiratory chain. The b-c1 complex mediates electron transfer from ubiquinol to cytochrome c. Contributes to the generation of a proton gradient across the mitochondrial membrane that is then used for ATP synthesis. This is Cytochrome b (MT-CYB) from Pachyptila salvini (Salvin's prion).